The chain runs to 327 residues: Phosphate acyltransferase (327 aa).

It belongs to the PlsX family. As to quaternary structure, homodimer. Probably interacts with PlsY.

The protein localises to the cytoplasm. The catalysed reaction is a fatty acyl-[ACP] + phosphate = an acyl phosphate + holo-[ACP]. Its pathway is lipid metabolism; phospholipid metabolism. Functionally, catalyzes the reversible formation of acyl-phosphate (acyl-PO(4)) from acyl-[acyl-carrier-protein] (acyl-ACP). This enzyme utilizes acyl-ACP as fatty acyl donor, but not acyl-CoA. This is Phosphate acyltransferase from Thermotoga neapolitana (strain ATCC 49049 / DSM 4359 / NBRC 107923 / NS-E).